The following is a 418-amino-acid chain: 1-acylglycerol-3-phosphate O-acyltransferase (418 aa).

The 131-residue stretch at 121 to 251 folds into the AB hydrolase-1 domain; the sequence is PTLVMVHGYG…RATWKGAVLN (131 aa). Residues 197 to 201 carry the GXSXG motif; it reads GHSFG. Positions 379 to 384 match the HXXXXD motif motif; the sequence is HFVFID.

Belongs to the peptidase S33 family. ABHD4/ABHD5 subfamily.

The protein localises to the cytoplasm. The catalysed reaction is a 1-acyl-sn-glycero-3-phosphate + an acyl-CoA = a 1,2-diacyl-sn-glycero-3-phosphate + CoA. Lysophosphatidic acid acyltransferase which functions in phosphatidic acid biosynthesis. Is highly specific for lysophosphatidic acid and able to use different acyl-CoA donors. May regulate neutral lipid accumulation and participate in the regulation of lipid turnover in vegetative cells. Possesses additional triacylglycerol lipase and phospholipase A2 activities in vitro. Is not active as esterase or lysophospholipase. This chain is 1-acylglycerol-3-phosphate O-acyltransferase, found in Arabidopsis thaliana (Mouse-ear cress).